The sequence spans 206 residues: Ribosomal RNA small subunit methyltransferase G (206 aa).

S-adenosyl-L-methionine is bound by residues G73, L78, V124–E125, and R139.

Belongs to the methyltransferase superfamily. RNA methyltransferase RsmG family.

The protein localises to the cytoplasm. It catalyses the reaction guanosine(527) in 16S rRNA + S-adenosyl-L-methionine = N(7)-methylguanosine(527) in 16S rRNA + S-adenosyl-L-homocysteine. Functionally, specifically methylates the N7 position of guanine in position 527 of 16S rRNA. This chain is Ribosomal RNA small subunit methyltransferase G, found in Edwardsiella ictaluri (strain 93-146).